A 28-amino-acid chain; its full sequence is Ranatuerin-2LTa (28 aa).

An intrachain disulfide couples C23 to C28.

In terms of tissue distribution, expressed by the skin glands.

Its subcellular location is the secreted. Its function is as follows. Has antibacterial activity. The sequence is that of Ranatuerin-2LTa from Rana latastei (Italian agile frog).